The following is a 497-amino-acid chain: Hexokinase-1 (497 aa).

Residues 4–24 (ATVGAAVIGAATVCAVAALIV) form a helical membrane-spanning segment. In terms of domain architecture, Hexokinase spans 35–487 (ARAMAILREF…SGIGAALLAA (453 aa)). Residues 90 to 228 (TGDEAGVFYA…GVDMRVSALV (139 aa)) are hexokinase small subdomain. Positions 104, 105, and 106 each coordinate ADP. Positions 194, 195, 229, and 230 each coordinate D-glucose. Residues 229 to 476 (NDTVGTLAGG…TSIVFEHSND (248 aa)) form a hexokinase large subdomain region. ADP is bound at residue T253. Residues N256, E284, and E315 each coordinate D-glucose. Position 441 (G441) interacts with ADP.

The protein belongs to the hexokinase family.

It is found in the plastid. It localises to the chloroplast outer membrane. The enzyme catalyses a D-hexose + ATP = a D-hexose 6-phosphate + ADP + H(+). It catalyses the reaction D-fructose + ATP = D-fructose 6-phosphate + ADP + H(+). The catalysed reaction is D-glucose + ATP = D-glucose 6-phosphate + ADP + H(+). The protein operates within carbohydrate metabolism; hexose metabolism. Its pathway is carbohydrate degradation; glycolysis; D-glyceraldehyde 3-phosphate and glycerone phosphate from D-glucose: step 1/4. Its function is as follows. Fructose and glucose phosphorylating enzyme. The polypeptide is Hexokinase-1 (HXK1) (Nicotiana tabacum (Common tobacco)).